The primary structure comprises 190 residues: RNA pyrophosphohydrolase (190 aa).

Positions 6-149 (GYRPNVGIVL…KRGVYARALC (144 aa)) constitute a Nudix hydrolase domain. Positions 38-59 (GGMHSDETPVEAMYRELNEETG) match the Nudix box motif.

Belongs to the Nudix hydrolase family. RppH subfamily. A divalent metal cation is required as a cofactor.

In terms of biological role, accelerates the degradation of transcripts by removing pyrophosphate from the 5'-end of triphosphorylated RNA, leading to a more labile monophosphorylated state that can stimulate subsequent ribonuclease cleavage. This is RNA pyrophosphohydrolase from Xylella fastidiosa (strain 9a5c).